Reading from the N-terminus, the 969-residue chain is MTRVNSIIGFRPIPVTLLTVITYVSLFSALLFIDRQPPAVAKKGELDYWGVDIEEAWSDLEVLTRDFHPYNSRPNDDVRAYLLGRVQEILSRNGVSGFGNELQSSGYSGTVDLFDDGIPGKPGSNVTFVGAGSEDLTVYFEGTNIIVYIHGERPADELSPVLVSAHYDSVSTGYGATDDGAAVVSILQIIKSFTRPESQGGKRPKRGLVALLNNGEEDFLNGARAFAMHPVAKLPHSFLNLEGAGAGGRATLFRSTDAEVTKYYKRAKRPFGTIVSGDGFKAGLIRSGTDYSVFVENLGMRGLDVAFYQPRSRYHTTEDDARHSSKRSLWHMLGGSLATLRGMTDDTSKVFDSPNGSAGKGHNAVWFDLFGRAFSVLHLHTIFAFTITLIVVPFVVVLVAMWALGHFDKLYFFSNTAYIPPPPEHSIASRTTQGWRGVLRFPVAFVAASAGVVGMAFLINKINPMVVYASQYTVWTCFLSTWWIIAWVILRGADAVRPTALARGYGFLEQWLLWLVAMIGVAISIGKSHLGSGYWVLVFYSGFFTSAFISLLEMAALQKKSEVKIAVSGDDQAYPPEEHSQTGASGNISNRAANDDDDAGEHATEETPLFRGPNRPLSFAPHRNPRYDNGDHDSGDILVEEKDEAVYGGEQGWSKDLPSWTWILQFLATVPLQLVLAGSVALLLGNALAQTGADGSDMLTVLLGFGVFSIILLLPVAPFLHRITYHVTLFIFVIFVGTFIYNLAAPPFSPNARLKVYFQQTVDLQTGENNVHLVGHPDYIDRIVSKHIPSAKGKVDICQADKLKSGLRRCSWKGIAPRVVPQAPGGMPPEYGFSDWISYNVTKTGDGKATIKLRGRNTRACKLLFNKPLAKSPTLGNPIPGFPNTRELRLWSRDWERGWSVELTWEKEEDQEENKDSHSSAIVVCLWSDGNKVSDEIPALHEIRRYLPVWAIASKLADGLVEGSVPFMI.

The Cytoplasmic portion of the chain corresponds to 1-12 (MTRVNSIIGFRP). A helical transmembrane segment spans residues 13 to 33 (IPVTLLTVITYVSLFSALLFI). At 34–381 (DRQPPAVAKK…RAFSVLHLHT (348 aa)) the chain is on the vacuolar side. Residue Asn125 is glycosylated (N-linked (GlcNAc...) asparagine). Zn(2+)-binding residues include His166 and Asp178. The active-site Proton acceptor is Glu216. Glu217, Glu242, and His315 together coordinate Zn(2+). Asn355 is a glycosylation site (N-linked (GlcNAc...) asparagine). A helical transmembrane segment spans residues 382–402 (IFAFTITLIVVPFVVVLVAMW). Residues 403–438 (ALGHFDKLYFFSNTAYIPPPPEHSIASRTTQGWRGV) lie on the Cytoplasmic side of the membrane. The helical transmembrane segment at 439-459 (LRFPVAFVAASAGVVGMAFLI) threads the bilayer. The Vacuolar portion of the chain corresponds to 460 to 469 (NKINPMVVYA). The helical transmembrane segment at 470–490 (SQYTVWTCFLSTWWIIAWVIL) threads the bilayer. Topologically, residues 491–505 (RGADAVRPTALARGY) are cytoplasmic. A helical transmembrane segment spans residues 506-526 (GFLEQWLLWLVAMIGVAISIG). Over 527 to 531 (KSHLG) the chain is Vacuolar. A helical membrane pass occupies residues 532-552 (SGYWVLVFYSGFFTSAFISLL). The Cytoplasmic segment spans residues 553–662 (EMAALQKKSE…WSKDLPSWTW (110 aa)). The tract at residues 571–629 (DQAYPPEEHSQTGASGNISNRAANDDDDAGEHATEETPLFRGPNRPLSFAPHRNPRYDN) is disordered. A compositionally biased stretch (polar residues) spans 581-592 (QTGASGNISNRA). Residues 663 to 683 (ILQFLATVPLQLVLAGSVALL) form a helical membrane-spanning segment. At 684-698 (LGNALAQTGADGSDM) the chain is on the vacuolar side. The chain crosses the membrane as a helical span at residues 699–719 (LTVLLGFGVFSIILLLPVAPF). Residues 720 to 727 (LHRITYHV) lie on the Cytoplasmic side of the membrane. A helical transmembrane segment spans residues 728–748 (TLFIFVIFVGTFIYNLAAPPF). Over 749–969 (SPNARLKVYF…LVEGSVPFMI (221 aa)) the chain is Vacuolar. Asn840 is a glycosylation site (N-linked (GlcNAc...) asparagine).

This sequence belongs to the peptidase M28 family. It depends on Zn(2+) as a cofactor.

Its subcellular location is the vacuole membrane. In terms of biological role, may be involved in vacuolar sorting and osmoregulation. The protein is Vacuolar membrane protease of Tuber melanosporum (strain Mel28) (Perigord black truffle).